We begin with the raw amino-acid sequence, 321 residues long: Mitochondrial coenzyme A transporter SLC25A42 (321 aa).

Solcar repeat units follow at residues 33-119 (RSVL…YKGI), 131-216 (LPPV…LKKT), and 226-314 (PFPY…TQIL). 6 helical membrane-spanning segments follow: residues 35 to 55 (VLNSLVSGAFAGAVAKTAVAP), 91 to 111 (LWRGNSATMVRVIPYAAIQFC), 137 to 154 (LLAGSLAGTTAAIITYPL), 191 to 208 (GFTPTILGVVPYAGLSFF), 232 to 252 (LVFGACAGLIGQSASYPLDVV), and 295 to 315 (VKGPIAVGISFMTFDLTQILL).

Belongs to the mitochondrial carrier (TC 2.A.29) family.

It localises to the mitochondrion inner membrane. The catalysed reaction is ADP(out) + CoA(in) = ADP(in) + CoA(out). It carries out the reaction 3'-dephospho-CoA(in) + ADP(out) = 3'-dephospho-CoA(out) + ADP(in). The enzyme catalyses adenosine 3',5'-bisphosphate(in) + ADP(out) = adenosine 3',5'-bisphosphate(out) + ADP(in). It catalyses the reaction AMP(in) + ADP(out) = AMP(out) + ADP(in). The catalysed reaction is dADP(in) + ADP(out) = dADP(out) + ADP(in). It carries out the reaction ADP(in) + ATP(out) = ADP(out) + ATP(in). Functionally, mitochondrial carrier mediating the transport of coenzyme A (CoA) in mitochondria in exchange for intramitochondrial (deoxy)adenine nucleotides and adenosine 3',5'-diphosphate. This Danio rerio (Zebrafish) protein is Mitochondrial coenzyme A transporter SLC25A42 (slc25a42).